We begin with the raw amino-acid sequence, 202 residues long: LexA repressor (202 aa).

A DNA-binding region (H-T-H motif) is located at residues 28–48 (QQEIARAFGFRSLGTVRNYLV). Catalysis depends on for autocatalytic cleavage activity residues S120 and K157.

It belongs to the peptidase S24 family. Homodimer.

The catalysed reaction is Hydrolysis of Ala-|-Gly bond in repressor LexA.. Functionally, represses a number of genes involved in the response to DNA damage (SOS response), including recA and lexA. In the presence of single-stranded DNA, RecA interacts with LexA causing an autocatalytic cleavage which disrupts the DNA-binding part of LexA, leading to derepression of the SOS regulon and eventually DNA repair. This chain is LexA repressor, found in Syntrophotalea carbinolica (strain DSM 2380 / NBRC 103641 / GraBd1) (Pelobacter carbinolicus).